Reading from the N-terminus, the 204-residue chain is Thiamine-phosphate synthase (204 aa).

4-amino-2-methyl-5-(diphosphooxymethyl)pyrimidine contacts are provided by residues 37 to 41 and Asn-69; that span reads QVREK. 2 residues coordinate Mg(2+): Asp-70 and Asp-89. Position 108 (Ser-108) interacts with 4-amino-2-methyl-5-(diphosphooxymethyl)pyrimidine. 134-136 serves as a coordination point for 2-[(2R,5Z)-2-carboxy-4-methylthiazol-5(2H)-ylidene]ethyl phosphate; it reads TGT. Lys-137 lines the 4-amino-2-methyl-5-(diphosphooxymethyl)pyrimidine pocket. 2-[(2R,5Z)-2-carboxy-4-methylthiazol-5(2H)-ylidene]ethyl phosphate-binding positions include Gly-165 and 185–186; that span reads IS.

It belongs to the thiamine-phosphate synthase family. Requires Mg(2+) as cofactor.

It catalyses the reaction 2-[(2R,5Z)-2-carboxy-4-methylthiazol-5(2H)-ylidene]ethyl phosphate + 4-amino-2-methyl-5-(diphosphooxymethyl)pyrimidine + 2 H(+) = thiamine phosphate + CO2 + diphosphate. It carries out the reaction 2-(2-carboxy-4-methylthiazol-5-yl)ethyl phosphate + 4-amino-2-methyl-5-(diphosphooxymethyl)pyrimidine + 2 H(+) = thiamine phosphate + CO2 + diphosphate. The catalysed reaction is 4-methyl-5-(2-phosphooxyethyl)-thiazole + 4-amino-2-methyl-5-(diphosphooxymethyl)pyrimidine + H(+) = thiamine phosphate + diphosphate. It functions in the pathway cofactor biosynthesis; thiamine diphosphate biosynthesis; thiamine phosphate from 4-amino-2-methyl-5-diphosphomethylpyrimidine and 4-methyl-5-(2-phosphoethyl)-thiazole: step 1/1. Functionally, condenses 4-methyl-5-(beta-hydroxyethyl)thiazole monophosphate (THZ-P) and 2-methyl-4-amino-5-hydroxymethyl pyrimidine pyrophosphate (HMP-PP) to form thiamine monophosphate (TMP). This Clostridium novyi (strain NT) protein is Thiamine-phosphate synthase.